Here is a 391-residue protein sequence, read N- to C-terminus: 3-ketoacyl-CoA thiolase (391 aa).

The Acyl-thioester intermediate role is filled by cysteine 95. Active-site proton acceptor residues include histidine 347 and cysteine 377.

It belongs to the thiolase-like superfamily. Thiolase family. Heterotetramer of two alpha chains (FadB) and two beta chains (FadA).

It localises to the cytoplasm. It carries out the reaction an acyl-CoA + acetyl-CoA = a 3-oxoacyl-CoA + CoA. Its pathway is lipid metabolism; fatty acid beta-oxidation. Catalyzes the final step of fatty acid oxidation in which acetyl-CoA is released and the CoA ester of a fatty acid two carbons shorter is formed. The polypeptide is 3-ketoacyl-CoA thiolase (Ectopseudomonas mendocina (strain ymp) (Pseudomonas mendocina)).